We begin with the raw amino-acid sequence, 308 residues long: Elongation factor Ts (308 aa).

Positions Thr80–Val83 are involved in Mg(2+) ion dislocation from EF-Tu.

It belongs to the EF-Ts family.

It localises to the cytoplasm. Functionally, associates with the EF-Tu.GDP complex and induces the exchange of GDP to GTP. It remains bound to the aminoacyl-tRNA.EF-Tu.GTP complex up to the GTP hydrolysis stage on the ribosome. In Rhodopseudomonas palustris (strain ATCC BAA-98 / CGA009), this protein is Elongation factor Ts.